We begin with the raw amino-acid sequence, 213 residues long: Ras-related protein Rab-25 (213 aa).

GTP-binding residues include Ser-21, Gly-24, Lys-25, Thr-26, Asn-27, Ser-38, His-39, Thr-43, and Thr-44. Thr-26 is a binding site for Mg(2+). 2 short sequence motifs (switch) span residues 35–49 and 67–84; these read NEFS…GVEF and DTAG…YYRG. Residues Thr-44 and Asp-67 each contribute to the Mg(2+) site. The GTP site is built by Gly-70, Asn-125, Lys-126, Asp-128, Ala-156, and Leu-157. S-geranylgeranyl cysteine attachment occurs at residues Cys-209 and Cys-210. Cys-210 is modified (cysteine methyl ester). Positions 211–213 are cleaved as a propeptide — removed in mature form; that stretch reads INL.

Belongs to the small GTPase superfamily. Rab family. As to quaternary structure, interacts (GTP-bound form) with RAB11FIP1, RAB11FIP2, RAB11FIP3 and RAB11FIP4. Interacts (via the hypervariable C-terminal region) with ITGB1 (via the cytoplasmic region); the interaction is GTP-dependent. Interacts with ITGAV. Associates with the integrin alpha-V/beta-1 heterodimer. Interacts with VPS33B. Mg(2+) is required as a cofactor. Expression is restricted to epithelial cells. Expressed in the gastrointestinal mucosa, (highest expression seen in the ileum and colon), kidney, and lung. A very minor and variable level of expression is seen in the splenic tissue.

It is found in the cell membrane. The protein resides in the cell projection. The protein localises to the pseudopodium membrane. Its subcellular location is the cytoplasmic vesicle. It catalyses the reaction GTP + H2O = GDP + phosphate + H(+). Its activity is regulated as follows. Regulated by guanine nucleotide exchange factors (GEFs) which promote the exchange of bound GDP for free GTP. Regulated by GTPase activating proteins (GAPs) which increase the GTP hydrolysis activity. Inhibited by GDP dissociation inhibitors (GDIs) which prevent Rab-GDP dissociation. The small GTPases Rab are key regulators of intracellular membrane trafficking, from the formation of transport vesicles to their fusion with membranes. Rabs cycle between an inactive GDP-bound form and an active GTP-bound form that is able to recruit to membranes different set of downstream effectors directly responsible for vesicle formation, movement, tethering and fusion. RAB25 regulates epithelial cell differentiation, proliferation and survival, thereby playing key roles in tumorigenesis. Promotes invasive migration of cells in which it functions to localize and maintain integrin alpha-V/beta-1 at the tips of extending pseudopodia. Involved in the regulation of epithelial morphogenesis through the control of CLDN4 expression and localization at tight junctions. May selectively regulate the apical recycling pathway. Together with MYO5B regulates transcytosis. The sequence is that of Ras-related protein Rab-25 (RAB25) from Oryctolagus cuniculus (Rabbit).